Consider the following 88-residue polypeptide: MSRSLRKGPFVDHHLLKKVRDMNALEKKTPIKTWSRRSMITPEMIGHTFEVHNGRKFLTVFVSETMVGHKLGEFSPTRMFKSHPVKKG.

It belongs to the universal ribosomal protein uS19 family.

In terms of biological role, protein S19 forms a complex with S13 that binds strongly to the 16S ribosomal RNA. The protein is Small ribosomal subunit protein uS19 (rpsS) of Chlamydia muridarum (strain MoPn / Nigg).